The sequence spans 503 residues: SWI/SNF and RSC complexes subunit ssr2 (503 aa).

The 98-residue stretch at 18-115 (IIVPSYAGWF…YQIDPETRPA (98 aa)) folds into the SWIRM domain. Serine 175 carries the post-translational modification Phosphoserine. Residues 188–242 (RVDKVCFTCGVNCSQTWYHNLKNKKYDICPNCYKQGRFSSSFNSSDFLCMDAIDF) form a ZZ-type; degenerate zinc finger. Positions 193, 196, 216, and 219 each coordinate Zn(2+). The region spanning 245–296 (DEEKPWSNQETLLLLEAIETYGDDWNQIALHVGSRTKEQCLIHFLQIPIEDP) is the SANT domain. Serine 306 is subject to Phosphoserine.

The protein belongs to the SMARCC family. As to quaternary structure, component of the RSC complex composed of at least arp9, arp42, rsc1, rsc4, rsc7, rsc9, rsc58, sfh1, snf21, ssr1, ssr2, ssr3 and ssr4. The complex interacts with histone and histone variant components of centromeric chromatin. Component of the SWI/SNF global transcription activator complex composed of at least arp9, arp42, snf5, snf22, snf30, sbf59, sol1, ssr1, ssr2, ssr3, ssr4 and tfg3.

It localises to the cytoplasm. Its subcellular location is the nucleus. Its function is as follows. Component of the chromatin structure remodeling complex (RSC), which is involved in transcription regulation and nucleosome positioning. Controls particularly membrane and organelle development genes. Part of the SWI/SNF complex, an ATP-dependent chromatin remodeling complex, required for the positive and negative regulation of gene expression of a large number of genes. It changes chromatin structure by altering DNA-histone contacts within a nucleosome, leading eventually to a change in nucleosome position, thus facilitating or repressing binding of gene-specific transcription factors. This is SWI/SNF and RSC complexes subunit ssr2 (ssr2) from Schizosaccharomyces pombe (strain 972 / ATCC 24843) (Fission yeast).